A 64-amino-acid chain; its full sequence is DNA-binding protein 7d (64 aa).

N6-methyllysine is present on residues K5, K7, K61, K63, and K64.

The protein belongs to the 7 kDa DNA-binding/endoribonuclease P2 family. In terms of assembly, monomer.

Its subcellular location is the cytoplasm. Can constrain negative DNA supercoils. May be involved in maintaining the integrity of the genome at high temperature. Stimulates the Holliday junction cleavage activity of Hjc. The sequence is that of DNA-binding protein 7d (sso7d) from Saccharolobus solfataricus (strain ATCC 35092 / DSM 1617 / JCM 11322 / P2) (Sulfolobus solfataricus).